Consider the following 476-residue polypeptide: Probable rhodanese domain-containing dual specificity protein phosphatase (476 aa).

Positions 32 to 190 constitute a Rhodanese domain; the sequence is IGSSKIIIDL…FQKDYSFMCN (159 aa). Residues 208–350 enclose the Tyrosine-protein phosphatase domain; the sequence is YPSEIIKDFL…LKDYQQHLTL (143 aa). Catalysis depends on Cys294, which acts as the Phosphocysteine intermediate. A compositionally biased stretch (low complexity) spans 425–436; it reads KTTTSSTTINNK. Residues 425–476 are disordered; it reads KTTTSSTTINNKGQQQDKAQEEKDSIFSYADKQEKMTHPTLHSPIELPQSSL. Positions 442–461 are enriched in basic and acidic residues; that stretch reads KAQEEKDSIFSYADKQEKMT.

The protein belongs to the protein-tyrosine phosphatase family. Non-receptor class dual specificity subfamily.

It carries out the reaction O-phospho-L-tyrosyl-[protein] + H2O = L-tyrosyl-[protein] + phosphate. The catalysed reaction is O-phospho-L-seryl-[protein] + H2O = L-seryl-[protein] + phosphate. The enzyme catalyses O-phospho-L-threonyl-[protein] + H2O = L-threonyl-[protein] + phosphate. Its function is as follows. Has a dual specificity toward Ser/Thr and Tyr-containing proteins. This is Probable rhodanese domain-containing dual specificity protein phosphatase from Dictyostelium discoideum (Social amoeba).